We begin with the raw amino-acid sequence, 389 residues long: Sedoheptulose-1,7-bisphosphatase, chloroplastic (389 aa).

Cys115 and Cys120 are disulfide-bonded. The Mg(2+) site is built by Asp126, Glu155, Asp173, Leu175, and Asp176. Substrate-binding positions include 176–179 (DGSS), Tyr287, and Lys317. Glu323 is a Mg(2+) binding site.

It belongs to the FBPase class 1 family. As to quaternary structure, homodimer. Mg(2+) serves as cofactor.

It localises to the plastid. The protein resides in the chloroplast. The catalysed reaction is D-sedoheptulose 1,7-bisphosphate + H2O = D-sedoheptulose 7-phosphate + phosphate. It participates in carbohydrate biosynthesis; Calvin cycle. This is Sedoheptulose-1,7-bisphosphatase, chloroplastic (CSBP) from Chlamydomonas reinhardtii (Chlamydomonas smithii).